A 143-amino-acid chain; its full sequence is Transcriptional regulator MraZ (143 aa).

SpoVT-AbrB domains are found at residues 5–47 (TYTP…PRAE) and 76–119 (TDEQ…DAAA).

The protein belongs to the MraZ family. In terms of assembly, forms oligomers.

Its subcellular location is the cytoplasm. It localises to the nucleoid. The polypeptide is Transcriptional regulator MraZ (Mycobacterium sp. (strain JLS)).